The sequence spans 204 residues: Small ribosomal subunit protein uS4 (204 aa).

The disordered stretch occupies residues 25-47 (SPVNKREYGPGQHGQRRKKPSDY). The region spanning 93–156 (RRLDAVVYRM…KQFAFVMEAA (64 aa)) is the S4 RNA-binding domain.

This sequence belongs to the universal ribosomal protein uS4 family. As to quaternary structure, part of the 30S ribosomal subunit. Contacts protein S5. The interaction surface between S4 and S5 is involved in control of translational fidelity.

In terms of biological role, one of the primary rRNA binding proteins, it binds directly to 16S rRNA where it nucleates assembly of the body of the 30S subunit. With S5 and S12 plays an important role in translational accuracy. The chain is Small ribosomal subunit protein uS4 from Rhodospirillum centenum (strain ATCC 51521 / SW).